The primary structure comprises 156 residues: Ribonuclease 7 (156 aa).

Residues 1–28 form the signal peptide; the sequence is MAPARAGFCPLLLLLLLGLWVAEIPVSA. Residues 29–32 are important for antibacterial activity; sequence KPKG. The Proton acceptor role is filled by histidine 43. Residues histidine 43, lysine 66, asparagine 69, and threonine 70 each coordinate dUMP. 4 disulfide bridges follow: cysteine 51-cysteine 109, cysteine 65-cysteine 119, cysteine 83-cysteine 134, and cysteine 90-cysteine 97. Asparagine 127 carries an N-linked (GlcNAc...) asparagine glycan. Residues 139–140 form an important for antibacterial activity region; that stretch reads KK. Residues histidine 151 and arginine 154 each coordinate dUMP. The active-site Proton donor is the histidine 151.

As to expression, expressed in collecting ducts in kidney, and in apical uroepithelium in bladder (at protein level). Expressed in various epithelial tissues including skin, respiratory tract, genito-urinary tract and, at a low level, in the gut. Expressed in liver, kidney, skeletal muscle and heart.

It localises to the secreted. Its function is as follows. Exhibits a potent RNase activity. Has broad-spectrum antimicrobial activity against many pathogenic microorganisms including uropathogenic E.coli (UPEC), and remarkably potent activity (lethal dose of 90% &lt; 30 nM) against a vancomycin resistant Enterococcus faecium. Causes loss of bacterial membrane integrity. Probably contributes to urinary tract sterility. Bactericidal activity is independent of RNase activity. The polypeptide is Ribonuclease 7 (RNASE7) (Homo sapiens (Human)).